We begin with the raw amino-acid sequence, 85 residues long: UPF0410 protein YdaS (85 aa).

3 helical membrane passes run 2 to 22, 28 to 48, and 58 to 78; these read LSFL…SAIV, GGIF…HGLL, and FAIF…GLIF.

Belongs to the UPF0410 family.

The protein localises to the cell membrane. This Bacillus subtilis (strain 168) protein is UPF0410 protein YdaS (ydaS).